The following is a 1219-amino-acid chain: Pleckstrin homology domain-containing family G member 3 (1219 aa).

The segment covering 1 to 10 (MPVSTSLHQD) has biased composition (polar residues). Residues 1–66 (MPVSTSLHQD…HLPNSNNNSS (66 aa)) are disordered. Residues 18–46 (SLTSTTSSSGSSCDSRSAMEEPSSSEAPA) show a composition bias toward low complexity. Ser-76 bears the Phosphoserine mark. One can recognise a DH domain in the interval 93–272 (YLGRVVREIV…TCVAWYINDM (180 aa)). Positions 296-394 (DLTTYGELVL…WTHHIKRLIL (99 aa)) constitute a PH domain. Residues 431–442 (WSSQDEVSTNVR) show a composition bias toward polar residues. Disordered stretches follow at residues 431 to 599 (WSSQ…PSVL) and 613 to 708 (FSRR…KESA). A Phosphoserine modification is found at Ser-433. Positions 446–463 (RQSEPTKHLLRQLNEKAR) are enriched in basic and acidic residues. Ser-576, Ser-577, Ser-618, Ser-631, Ser-640, Ser-643, and Ser-647 each carry phosphoserine. Low complexity predominate over residues 630–645 (GSPRLVSRSSSVLSLE). Positions 696-708 (EPDRSSCKKKESA) are enriched in basic and acidic residues. A phosphoserine mark is found at Ser-741, Ser-779, and Ser-827. 5 disordered regions span residues 756–780 (RFNS…VGSR), 821–840 (MESS…ANGF), 859–878 (EESA…RSPA), 955–1133 (APER…LYVT), and 1146–1207 (VMEK…RVRN). Gly residues predominate over residues 826–836 (GSPGKGPGQGQ). Residues 859–873 (EESATASPESSSPTE) show a composition bias toward low complexity. Phosphoserine occurs at positions 962, 1011, 1023, 1037, and 1040. The span at 1020-1029 (SAVSQRTTSP) shows a compositional bias: polar residues. A compositionally biased stretch (basic and acidic residues) spans 1049–1065 (DVRELCSKYASRDEARR). A Phosphoserine modification is found at Ser-1081. Omega-N-methylarginine is present on Arg-1107. A compositionally biased stretch (basic and acidic residues) spans 1187–1197 (QPKEEGSRDPA).

The protein localises to the cytoplasm. The protein resides in the cytoskeleton. Its function is as follows. Plays a role in controlling cell polarity and cell motility by selectively binding newly polymerized actin and activating RAC1 and CDC42 to enhance local actin polymerization. This is Pleckstrin homology domain-containing family G member 3 from Homo sapiens (Human).